Consider the following 298-residue polypeptide: Dihydrodipicolinate reductase-like protein CRR1, chloroplastic (298 aa).

Residues 1–25 (MAAVNCHFFQLSRHLKPSRPSFSCS) constitute a chloroplast transit peptide. 160-163 (APTL) contacts NAD(+).

Belongs to the DapB family. In terms of tissue distribution, expressed specifically in leaves.

Its subcellular location is the plastid. It is found in the chloroplast stroma. In terms of biological role, dihydrodipicolinate reductase (DHPR)-like protein that may not function as DHPR in lysine biosynthesis. Required for both formation and activity of the chloroplast NAD(P)H dehydrogenase (NDH) complex of the photosynthetic electron transport chain. May function in assembly or stabilization of the NDH complex. This chain is Dihydrodipicolinate reductase-like protein CRR1, chloroplastic, found in Arabidopsis thaliana (Mouse-ear cress).